Consider the following 550-residue polypeptide: Methionine--tRNA ligase (550 aa).

The short motif at 13 to 23 is the 'HIGH' region element; the sequence is PYANGPLHFGH. Cys-145, Cys-148, Cys-158, and Cys-161 together coordinate Zn(2+). The 'KMSKS' region signature appears at 331-335; sequence QFSKS. Lys-334 contacts ATP.

This sequence belongs to the class-I aminoacyl-tRNA synthetase family. MetG type 1 subfamily. As to quaternary structure, monomer. Requires Zn(2+) as cofactor.

It is found in the cytoplasm. It carries out the reaction tRNA(Met) + L-methionine + ATP = L-methionyl-tRNA(Met) + AMP + diphosphate. In terms of biological role, is required not only for elongation of protein synthesis but also for the initiation of all mRNA translation through initiator tRNA(fMet) aminoacylation. The chain is Methionine--tRNA ligase (metG) from Chlamydia muridarum (strain MoPn / Nigg).